We begin with the raw amino-acid sequence, 571 residues long: Adenine deaminase (571 aa).

The protein belongs to the metallo-dependent hydrolases superfamily. Adenine deaminase family. Requires Mn(2+) as cofactor.

The enzyme catalyses adenine + H2O + H(+) = hypoxanthine + NH4(+). This Dehalococcoides mccartyi (strain ATCC BAA-2100 / JCM 16839 / KCTC 5957 / BAV1) protein is Adenine deaminase.